We begin with the raw amino-acid sequence, 232 residues long: Small ribosomal subunit protein uS3 (232 aa).

One can recognise a KH type-2 domain in the interval 39-107; that stretch reads VRQFLIKELA…PAQINIAEVR (69 aa).

Belongs to the universal ribosomal protein uS3 family. In terms of assembly, part of the 30S ribosomal subunit. Forms a tight complex with proteins S10 and S14.

Binds the lower part of the 30S subunit head. Binds mRNA in the 70S ribosome, positioning it for translation. This is Small ribosomal subunit protein uS3 from Serratia proteamaculans (strain 568).